A 341-amino-acid chain; its full sequence is Keratin-associated protein 29-1 (341 aa).

7 consecutive repeat copies span residues 5–9, 115–119, 120–124, 150–154, 240–244, 276–280, and 307–311. The tract at residues 5 to 311 is 7 X 5 AA repeats of C-C-X(3); sequence CCPGNTTAIP…GCKSACCVTG (307 aa).

Belongs to the KRTAP type 10 family.

This is Keratin-associated protein 29-1 (KRTAP29-1) from Homo sapiens (Human).